The sequence spans 787 residues: LPS-assembly protein LptD (787 aa).

The N-terminal stretch at M1–A39 is a signal peptide.

This sequence belongs to the LptD family. As to quaternary structure, component of the lipopolysaccharide transport and assembly complex. Interacts with LptE and LptA.

Its subcellular location is the cell outer membrane. Functionally, together with LptE, is involved in the assembly of lipopolysaccharide (LPS) at the surface of the outer membrane. The polypeptide is LPS-assembly protein LptD (Burkholderia thailandensis (strain ATCC 700388 / DSM 13276 / CCUG 48851 / CIP 106301 / E264)).